The sequence spans 509 residues: 2,3-bisphosphoglycerate-independent phosphoglycerate mutase (509 aa).

Asp-11 serves as a coordination point for Mn(2+). Tyr-35 is subject to Phosphotyrosine. Ser-61 serves as a coordination point for Mn(2+). The active-site Phosphoserine intermediate is the Ser-61. Residues His-122, 152–153 (RD), Arg-184, Arg-190, 260–263 (RPDR), and Lys-335 contribute to the substrate site. Mn(2+) contacts are provided by Asp-402, His-406, Asp-443, His-444, and His-461.

It belongs to the BPG-independent phosphoglycerate mutase family. In terms of assembly, monomer. The cofactor is Mn(2+).

It carries out the reaction (2R)-2-phosphoglycerate = (2R)-3-phosphoglycerate. It participates in carbohydrate degradation; glycolysis; pyruvate from D-glyceraldehyde 3-phosphate: step 3/5. Functionally, essential for rapid growth and for sporulation. Catalyzes the interconversion of 2-phosphoglycerate and 3-phosphoglycerate. The chain is 2,3-bisphosphoglycerate-independent phosphoglycerate mutase from Bacillus cereus (strain ATCC 14579 / DSM 31 / CCUG 7414 / JCM 2152 / NBRC 15305 / NCIMB 9373 / NCTC 2599 / NRRL B-3711).